A 463-amino-acid polypeptide reads, in one-letter code: L-seryl-tRNA(Sec) selenium transferase (463 aa).

N6-(pyridoxal phosphate)lysine is present on Lys-295.

The protein belongs to the SelA family. In terms of assembly, homodecamer; pentamer of dimers. Binds only one seryl-tRNA(Sec) per dimer. It depends on pyridoxal 5'-phosphate as a cofactor.

The protein localises to the cytoplasm. It carries out the reaction L-seryl-tRNA(Sec) + selenophosphate + H(+) = L-selenocysteinyl-tRNA(Sec) + phosphate. Its pathway is aminoacyl-tRNA biosynthesis; selenocysteinyl-tRNA(Sec) biosynthesis; selenocysteinyl-tRNA(Sec) from L-seryl-tRNA(Sec) (bacterial route): step 1/1. Converts seryl-tRNA(Sec) to selenocysteinyl-tRNA(Sec) required for selenoprotein biosynthesis. The protein is L-seryl-tRNA(Sec) selenium transferase of Shigella flexneri serotype 5b (strain 8401).